The primary structure comprises 438 residues: Serine hydroxymethyltransferase (438 aa).

(6S)-5,6,7,8-tetrahydrofolate is bound by residues Leu-133 and 137 to 139 (GHL). Lys-242 bears the N6-(pyridoxal phosphate)lysine mark.

It belongs to the SHMT family. Homodimer. Pyridoxal 5'-phosphate is required as a cofactor.

The protein localises to the cytoplasm. It catalyses the reaction (6R)-5,10-methylene-5,6,7,8-tetrahydrofolate + glycine + H2O = (6S)-5,6,7,8-tetrahydrofolate + L-serine. Its pathway is one-carbon metabolism; tetrahydrofolate interconversion. It participates in amino-acid biosynthesis; glycine biosynthesis; glycine from L-serine: step 1/1. Functionally, catalyzes the reversible interconversion of serine and glycine with tetrahydrofolate (THF) serving as the one-carbon carrier. This reaction serves as the major source of one-carbon groups required for the biosynthesis of purines, thymidylate, methionine, and other important biomolecules. Also exhibits THF-independent aldolase activity toward beta-hydroxyamino acids, producing glycine and aldehydes, via a retro-aldol mechanism. The sequence is that of Serine hydroxymethyltransferase from Brucella canis (strain ATCC 23365 / NCTC 10854 / RM-666).